The primary structure comprises 186 residues: Potassium-transporting ATPase KdpC subunit 1 (186 aa).

Residues 10–30 (LTIITMVLCGFLFPLAITLIG) form a helical membrane-spanning segment.

This sequence belongs to the KdpC family. The system is composed of three essential subunits: KdpA, KdpB and KdpC.

It is found in the cell membrane. Part of the high-affinity ATP-driven potassium transport (or Kdp) system, which catalyzes the hydrolysis of ATP coupled with the electrogenic transport of potassium into the cytoplasm. This subunit acts as a catalytic chaperone that increases the ATP-binding affinity of the ATP-hydrolyzing subunit KdpB by the formation of a transient KdpB/KdpC/ATP ternary complex. The protein is Potassium-transporting ATPase KdpC subunit 1 of Staphylococcus aureus (strain Mu50 / ATCC 700699).